We begin with the raw amino-acid sequence, 565 residues long: NAD-dependent malic enzyme (565 aa).

Tyr-104 functions as the Proton donor in the catalytic mechanism. Residue Arg-157 participates in NAD(+) binding. Lys-175 serves as the catalytic Proton acceptor. The a divalent metal cation site is built by Glu-246, Asp-247, and Asp-270. Asp-270 and Asn-418 together coordinate NAD(+).

The protein belongs to the malic enzymes family. As to quaternary structure, homotetramer. Mg(2+) serves as cofactor. Requires Mn(2+) as cofactor.

It carries out the reaction (S)-malate + NAD(+) = pyruvate + CO2 + NADH. The enzyme catalyses oxaloacetate + H(+) = pyruvate + CO2. The chain is NAD-dependent malic enzyme from Escherichia coli (strain SMS-3-5 / SECEC).